A 398-amino-acid polypeptide reads, in one-letter code: Phospholipase C (398 aa).

An N-terminal signal peptide occupies residues 1–26 (MKALKKVSNILCVLGLCTLMGGTSYA). The Zn(2+) site is built by Trp-27, His-37, Asp-82, His-94, His-152, Asp-156, His-162, His-174, and Glu-178. Positions 27–276 (WDGKKDGTGT…NEVSNGNTGD (250 aa)) constitute a Zn-dependent PLC domain. Residues 273–281 (NTGDNDSLT) form a linker region. In terms of domain architecture, PLAT spans 282–398 (NEFNIVLKTA…TGNETYYINK (117 aa)). Residues Gly-297, Thr-298, Asp-299, Asp-319, Asn-320, Gly-322, Asn-323, Asp-324, and Asp-363 each coordinate Ca(2+).

This sequence belongs to the bacterial zinc-metallophospholipase C family. It depends on Ca(2+) as a cofactor. Zn(2+) serves as cofactor.

It localises to the secreted. It carries out the reaction a 1,2-diacyl-sn-glycero-3-phosphocholine + H2O = phosphocholine + a 1,2-diacyl-sn-glycerol + H(+). Functionally, bacterial hemolysins are exotoxins that attack blood cell membranes and cause cell rupture. Binds to eukaryotic membranes where it hydrolyzes phosphatidylcholine. This enzyme has 10-fold less activity towards sphingomyelin than its C.perfringens counterpart, is approximately 100-fold less hemolytic against mouse erythrocytes and at least 100-fold less toxic in mice. The chain is Phospholipase C (plc) from Paraclostridium bifermentans (Clostridium bifermentans).